The primary structure comprises 388 residues: Spermidine/putrescine import ATP-binding protein PotA (388 aa).

Residues 17 to 247 (IEIDHVTKRF…PATVFVANFI (231 aa)) enclose the ABC transporter domain. 49 to 56 (GPSGCGKT) is an ATP binding site.

This sequence belongs to the ABC transporter superfamily. Spermidine/putrescine importer (TC 3.A.1.11.1) family. In terms of assembly, the complex is composed of two ATP-binding proteins (PotA), two transmembrane proteins (PotB and PotC) and a solute-binding protein (PotD).

Its subcellular location is the cell membrane. The catalysed reaction is ATP + H2O + polyamine-[polyamine-binding protein]Side 1 = ADP + phosphate + polyamineSide 2 + [polyamine-binding protein]Side 1.. Its function is as follows. Part of the ABC transporter complex PotABCD involved in spermidine/putrescine import. Responsible for energy coupling to the transport system. The sequence is that of Spermidine/putrescine import ATP-binding protein PotA from Mycobacterium sp. (strain KMS).